The primary structure comprises 301 residues: MEVNGGEGKVEMGSGLYPDWSELTRECLLDIFSRLSQEQRWIGPMLVSKNWMNACYDPTLNTIFDLETRFLSFPESINWWTPEFEDKVDSFLRSVVDRSEGGLTEIRIRHCTERSLSYAAERCPNLEVLWIKNCPNVTDASMEKIAMNCPNLRELDISYSYGITHESLITLGRSCQNLKILKRNLLPRLGPSLPTIVAPLDYLATFPRYGNIEARIIGKYMTQLKHLEIRYSTLTARGLDSVCKGCSNLEYMDLRGCISLTRSDINTNTSGLKNLTEIIKPDFNPPIAVLRVPRPGNPREE.

The 49-residue stretch at 18–66 folds into the F-box domain; the sequence is PDWSELTRECLLDIFSRLSQEQRWIGPMLVSKNWMNACYDPTLNTIFDL. 5 LRR repeats span residues 108–133, 134–159, 160–185, 231–256, and 257–282; these read IRHC…WIKN, CPNV…DISY, SYGI…KRNL, YSTL…DLRG, and CISL…IKPD.

This chain is Putative F-box/LRR-repeat protein 19 (FBL19), found in Arabidopsis thaliana (Mouse-ear cress).